The sequence spans 656 residues: Pentatricopeptide repeat-containing protein At1g62260, mitochondrial (656 aa).

15 PPR repeats span residues 70 to 104, 105 to 134, 135 to 169, 170 to 200, 203 to 227, 234 to 264, 280 to 310, 311 to 345, 346 to 372, 373 to 407, 408 to 438, 442 to 472, 474 to 508, 509 to 544, and 545 to 575; these read NTVT…DVVT, WNTM…MPSR, DSFS…NAVS, WSAM…DSSP, ALVA…YGSL, LVYA…IPDL, NVVS…MKDR, DTIS…DAHS, WNMM…TPEK, HTVS…GEKP, DPHT…VVKT, DVPV…MKLK, EVIT…GIYP, SHIT…KIEP, and QMEH…MPFE. The interval 580-655 is type E motif; the sequence is VWGALLDACR…ERGSSWVDSS (76 aa).

The protein belongs to the PPR family. PCMP-E subfamily.

It localises to the mitochondrion. In Arabidopsis thaliana (Mouse-ear cress), this protein is Pentatricopeptide repeat-containing protein At1g62260, mitochondrial (PCMP-E10).